Here is a 101-residue protein sequence, read N- to C-terminus: Urease subunit beta (101 aa).

It belongs to the urease beta subunit family. Heterotrimer of UreA (gamma), UreB (beta) and UreC (alpha) subunits. Three heterotrimers associate to form the active enzyme.

It is found in the cytoplasm. It carries out the reaction urea + 2 H2O + H(+) = hydrogencarbonate + 2 NH4(+). Its pathway is nitrogen metabolism; urea degradation; CO(2) and NH(3) from urea (urease route): step 1/1. The polypeptide is Urease subunit beta (Polaromonas naphthalenivorans (strain CJ2)).